A 181-amino-acid chain; its full sequence is MASISSSAIATVNRTTSTQASLAAPFTGLKSNVAFPVTKKANNDFSSLPSNGGRVQCMKVWPPIGLKKYETLSYLPPLSDEALSKEIDYLIRNKWIPCLEFELEHGFVYREHHHSPGYYDGRYWTMWKLPMFGCTDSAQVMKEVGECKKEYPNAFIRVIGFDNIRQVQCISFIVAKPPGVL.

A chloroplast-targeting transit peptide spans 1–56; sequence MASISSSAIATVNRTTSTQASLAAPFTGLKSNVAFPVTKKANNDFSSLPSNGGRVQ.

It belongs to the RuBisCO small chain family. As to quaternary structure, heterohexadecamer of 8 large and 8 small subunits.

Its subcellular location is the plastid. It localises to the chloroplast. Its function is as follows. RuBisCO catalyzes two reactions: the carboxylation of D-ribulose 1,5-bisphosphate, the primary event in carbon dioxide fixation, as well as the oxidative fragmentation of the pentose substrate. Both reactions occur simultaneously and in competition at the same active site. Although the small subunit is not catalytic it is essential for maximal activity. In Lactuca sativa (Garden lettuce), this protein is Ribulose bisphosphate carboxylase small subunit, chloroplastic.